The sequence spans 100 residues: uncharacterized protein (100 aa).

Residue Lys-98 forms an Isoglutamyl lysine isopeptide (Lys-Gln) (interchain with Q-Cter in protein Pup) linkage.

This is an uncharacterized protein from Mycobacterium tuberculosis (strain CDC 1551 / Oshkosh).